A 69-amino-acid polypeptide reads, in one-letter code: MVQIVVRDNNVEQALRALKKKMQREGLFREMKARQHFEKPSEKKARQRAEAVRRARKLARKRAQREGIV.

This sequence belongs to the bacterial ribosomal protein bS21 family.

In Hyphomonas neptunium (strain ATCC 15444), this protein is Small ribosomal subunit protein bS21.